The sequence spans 118 residues: UPF0102 protein Cphy_2398 (118 aa).

It belongs to the UPF0102 family.

This chain is UPF0102 protein Cphy_2398, found in Lachnoclostridium phytofermentans (strain ATCC 700394 / DSM 18823 / ISDg) (Clostridium phytofermentans).